We begin with the raw amino-acid sequence, 504 residues long: MEAPLQTEMVELVPNGKHSEGLLPVITPMAGNQRVEDPARSCMEGKSFLQKSPSKEPHFTDFEGKTSFGMSVFNLSNAIMGSGILGLAYAMANTGIILFLFLLTAVALLSSYSIHLLLKSSGVVGIRAYEQLGYRAFGTPGKLAAALAITLQNIGAMSSYLYIIKSELPLVIQTFLNLEEKTSDWYMNGNYLVILVSVTIILPLALMRQLGYLGYSSGFSLSCMVFFLIAVIYKKFHVPCPLPPNFNNTTGNFSHVEIVKEKVQLQVEPEASAFCTPSYFTLNSQTAYTIPIMAFAFVCHPEVLPIYTELKDPSKKKMQHISNLSIAVMYIMYFLAALFGYLTFYNGVESELLHTYSKVDPFDVLILCVRVAVLTAVTLTVPIVLFPVRRAIQQMLFPNQEFSWLRHVLIAVGLLTCINLLVIFAPNILGIFGVIGATSAPFLIFIFPAIFYFRIMPTEKEPARSTPKILALCFAMLGFLLMTMSLSFIIIDWASGTSRHGGNH.

Asn74 carries N-linked (GlcNAc...) asparagine glycosylation. Helical transmembrane passes span 83-103, 106-126, 144-164, 187-207, and 213-233; these read GILG…LFLL, VALL…VVGI, AAAL…LYII, MNGN…LALM, and LGYS…AVIY. A disulfide bridge connects residues Cys240 and Cys275. N-linked (GlcNAc...) asparagine glycosylation is found at Asn247, Asn248, Asn252, and Asn323. A run of 5 helical transmembrane segments spans residues 324 to 344, 366 to 386, 408 to 428, 431 to 451, and 471 to 491; these read LSIA…YLTF, ILCV…IVLF, VLIA…APNI, IFGV…PAIF, and ALCF…FIII.

Belongs to the amino acid/polyamine transporter 2 family.

The protein localises to the cell membrane. The protein resides in the basolateral cell membrane. It carries out the reaction L-glutamine(out) + Na(+)(out) + H(+)(in) = L-glutamine(in) + Na(+)(in) + H(+)(out). The enzyme catalyses L-asparagine(out) + Na(+)(out) + H(+)(in) = L-asparagine(in) + Na(+)(in) + H(+)(out). It catalyses the reaction L-histidine(out) + Na(+)(out) + H(+)(in) = L-histidine(in) + Na(+)(in) + H(+)(out). Symporter that cotransports specific neutral amino acids and sodium ions, coupled to an H(+) antiporter activity. Mainly participates in the glutamate-GABA-glutamine cycle in brain where it transports L-glutamine from astrocytes in the intercellular space for the replenishment of both neurotransmitters glutamate and gamma-aminobutyric acid (GABA) in neurons and also functions as the major influx transporter in ganglion cells mediating the uptake of glutamine. The transport activity is specific for L-glutamine, L-histidine and L-asparagine. The transport is electroneutral coupled to the cotransport of 1 Na(+) and the antiport of 1 H(+). The transport is pH dependent, saturable, Li(+) tolerant and functions in both direction depending on the concentration gradients of its substrates and cotransported ions. Also mediates an amino acid-gated H(+) conductance that is not stoichiometrically coupled to the amino acid transport but which influences the ionic gradients that drive the amino acid transport. In addition, may play a role in nitrogen metabolism, amino acid homeostasis, glucose metabolism and renal ammoniagenesis. The polypeptide is Sodium-coupled neutral amino acid transporter 3 (Homo sapiens (Human)).